The following is a 362-amino-acid chain: 1-aminocyclopropane-1-carboxylate oxidase homolog 10 (362 aa).

The Fe2OG dioxygenase domain occupies 211-310 (KGLFMLCHYY…RISVACFFSS (100 aa)). Residues histidine 235, aspartate 237, and histidine 291 each coordinate Fe cation. Arginine 301 is a 2-oxoglutarate binding site.

This sequence belongs to the iron/ascorbate-dependent oxidoreductase family. The cofactor is Fe(2+).

This chain is 1-aminocyclopropane-1-carboxylate oxidase homolog 10, found in Arabidopsis thaliana (Mouse-ear cress).